The chain runs to 861 residues: Importin subunit beta-1 (861 aa).

Ser2 carries the N-acetylserine modification. HEAT repeat units follow at residues Thr3–Asp35, Phe37–Lys66, Pro90–His129, Glu134–Glu164, Ser177–Ser208, Glu219–Tyr255, Lys260–Gln306, Phe317–Cys362, Leu367–Ser395, Lys402–Val442, Leu452–Leu484, Tyr496–Tyr530, Ala536–Lys586, Glu592–Leu629, Glu634–Ser669, Arg675–Ile713, Ile718–Gly764, Phe773–Met812, and Lys819–Leu859. In terms of domain architecture, Importin N-terminal spans Ser25–Ser106. Ser836 is modified (phosphoserine).

It belongs to the importin beta family. Importin beta-1 subfamily. Forms a complex with the importin alpha subunit (SRP1/KAP60). Interacts with Ran (GSP1); interacts specifically with the GTP-bound form of Ran (GTP-Ran), protecting it from GTP hydrolysis and nucleotide exchange. Interacts with nucleoporin NUP1.

It is found in the cytoplasm. It localises to the nucleus. Its subcellular location is the nuclear pore complex. In terms of biological role, importin beta subunit that functions in nuclear protein import through association with the importin alpha subunit, which binds to the classical nuclear localization signal (cNLS) in cargo substrates. Docking of the importin/substrate complex to the nuclear pore complex (NPC) is mediated by importin beta through binding to nucleoporin FxFG repeats and the complex is subsequently translocated through the pore by an energy requiring, Ran-dependent mechanism. At the nucleoplasmic side of the NPC, GTP-Ran binds to importin beta and the three components separate, leading to release of the cargo. Importin alpha and beta are re-exported from the nucleus to the cytoplasm where GTP hydrolysis releases Ran from importin beta. The directionality of nuclear import is thought to be conferred by an asymmetric distribution of the GTP- and GDP-bound forms of Ran between the cytoplasm and nucleus. Mediates the nuclear import of histones H2A and H2B. Mediates the nuclear import of transcription factor GCN4. This is Importin subunit beta-1 from Saccharomyces cerevisiae (strain ATCC 204508 / S288c) (Baker's yeast).